The chain runs to 147 residues: Large ribosomal subunit protein uL13 (147 aa).

Belongs to the universal ribosomal protein uL13 family. Part of the 50S ribosomal subunit.

This protein is one of the early assembly proteins of the 50S ribosomal subunit, although it is not seen to bind rRNA by itself. It is important during the early stages of 50S assembly. The protein is Large ribosomal subunit protein uL13 of Salinispora arenicola (strain CNS-205).